Here is a 624-residue protein sequence, read N- to C-terminus: Bifunctional 3'-phosphoadenosine 5'-phosphosulfate synthase 1 (624 aa).

Residue M1 is modified to N-acetylmethionine. The adenylyl-sulfate kinase stretch occupies residues 1 to 225 (MELPGSLCKK…VVELLQERDI (225 aa)). The residue at position 12 (K12) is an N6-acetyllysine. Position 62-67 (62-67 (GAGKTT)) interacts with ATP. Adenosine 5'-phosphosulfate contacts are provided by residues 89-92 (DNIR), F101, 106-109 (REEN), 132-133 (IS), K171, and 184-185 (GF). Residues C207, C212, 419-422 (QLRN), 521-525 (GRDPA), and A563 contribute to the ATP site. Residues 234 to 624 (VKELYVPENK…AEYYKALEKA (391 aa)) are sulfate adenylyltransferase.

In the N-terminal section; belongs to the APS kinase family. It in the C-terminal section; belongs to the sulfate adenylyltransferase family. As to quaternary structure, homodimer.

The enzyme catalyses sulfate + ATP + H(+) = adenosine 5'-phosphosulfate + diphosphate. The catalysed reaction is adenosine 5'-phosphosulfate + ATP = 3'-phosphoadenylyl sulfate + ADP + H(+). Its pathway is sulfur metabolism; sulfate assimilation. Functionally, bifunctional enzyme with both ATP sulfurylase and APS kinase activity, which mediates two steps in the sulfate activation pathway. The first step is the transfer of a sulfate group to ATP to yield adenosine 5'-phosphosulfate (APS), and the second step is the transfer of a phosphate group from ATP to APS yielding 3'-phosphoadenylylsulfate (PAPS: activated sulfate donor used by sulfotransferase). In mammals, PAPS is the sole source of sulfate; APS appears to be only an intermediate in the sulfate-activation pathway. Required for normal biosynthesis of sulfated L-selectin ligands in endothelial cells. This chain is Bifunctional 3'-phosphoadenosine 5'-phosphosulfate synthase 1 (PAPSS1), found in Cavia porcellus (Guinea pig).